We begin with the raw amino-acid sequence, 544 residues long: Lysophosphatidylcholine acyltransferase 2 (544 aa).

At 1-57 the chain is on the cytoplasmic side; sequence MSRCAQAAEVAATVPGAGVGNVGLRPPMVPRQASFFPPPVPNPFVQQTQIGSARRVQ. Residues 58 to 78 traverse the membrane as a helical; Signal-anchor for type II membrane protein segment; sequence IVLLGIILLPIRVLLVALILL. Over 79-544 the chain is Lumenal; it reads LAWPFAAIST…EESTSDKKDD (466 aa). The short motif at 146–151 is the HXXXXD motif element; sequence HSTFFD. Residues 220 to 223 carry the EGTC motif motif; the sequence is EGTC. EF-hand domains follow at residues 391–426 and 428–463; these read PVSD…LCNP and NTEE…SLGV. Residues aspartate 404, asparagine 406, aspartate 408, serine 410, glutamate 415, aspartate 441, aspartate 443, aspartate 445, tyrosine 447, and glutamate 452 each coordinate Ca(2+). Positions 518–529 are enriched in polar residues; sequence VQTTPSTASNKV. A disordered region spans residues 518 to 544; it reads VQTTPSTASNKVSPEKHEESTSDKKDD. Residues 530–544 show a composition bias toward basic and acidic residues; it reads SPEKHEESTSDKKDD.

It belongs to the 1-acyl-sn-glycerol-3-phosphate acyltransferase family.

Its subcellular location is the endoplasmic reticulum membrane. The protein localises to the golgi apparatus membrane. It localises to the cell membrane. The protein resides in the lipid droplet. The enzyme catalyses a 1-acyl-sn-glycero-3-phosphocholine + an acyl-CoA = a 1,2-diacyl-sn-glycero-3-phosphocholine + CoA. It catalyses the reaction a 1-O-alkyl-sn-glycero-3-phosphocholine + acetyl-CoA = a 1-O-alkyl-2-acetyl-sn-glycero-3-phosphocholine + CoA. It carries out the reaction a 1-acyl-sn-glycero-3-phosphate + an acyl-CoA = a 1,2-diacyl-sn-glycero-3-phosphate + CoA. The catalysed reaction is a 1-O-(1Z-alkenyl)-sn-glycero-3-phosphocholine + an acyl-CoA = a 1-O-(1Z-alkenyl)-2-acyl-sn-glycero-3-phosphocholine + CoA. The enzyme catalyses 1-hexadecanoyl-sn-glycero-3-phosphate + (9Z)-octadecenoyl-CoA = 1-hexadecanoyl-2-(9Z-octadecenoyl)-sn-glycero-3-phosphate + CoA. It catalyses the reaction 1-(9Z-octadecenoyl)-sn-glycero-3-phosphate + (9Z)-octadecenoyl-CoA = 1,2-di-(9Z-octadecenoyl)-sn-glycero-3-phosphate + CoA. It carries out the reaction 1-(9Z-octadecenoyl)-sn-glycero-3-phosphate + hexadecanoyl-CoA = 1-(9Z)-octadecenoyl-2-hexadecanoyl-sn-glycero-3-phosphate + CoA. The catalysed reaction is 1-heptadecanoyl-sn-glycero-3-phosphate + (9Z)-octadecenoyl-CoA = 1-heptadecanoyl-2-(9Z)-octadecenoyl-sn-glycero-3-phosphate + CoA. The enzyme catalyses 1-octadecanoyl-sn-glycero-3-phosphate + (9Z)-octadecenoyl-CoA = 1-octadecanoyl-2-(9Z-octadecenoyl)-sn-glycero-3-phosphate + CoA. It catalyses the reaction heptadecanoyl-CoA + 1-(9Z-octadecenoyl)-sn-glycero-3-phosphate = 1-(9Z)-octadecenoyl-2-heptadecanoyl-sn-glycero-3-phosphate + CoA. It carries out the reaction 1-(9Z-octadecenoyl)-sn-glycero-3-phosphate + (9Z,12Z)-octadecadienoyl-CoA = 1-(9Z)-octadecenoyl-2-(9Z,12Z)-octadecadienoyl-sn-glycero-3-phosphate + CoA. The catalysed reaction is 1-(9Z-octadecenoyl)-sn-glycero-3-phosphate + tetradecanoyl-CoA = 1-(9Z)-octadecenoyl-2-tetradecanoyl-sn-glycero-3-phosphate + CoA. The enzyme catalyses pentadecanoyl-CoA + 1-(9Z-octadecenoyl)-sn-glycero-3-phosphate = 1-(9Z)-octadecenoyl-2-pentadecanoyl-sn-glycero-3-phosphate + CoA. It catalyses the reaction nonadecanoyl-CoA + 1-(9Z-octadecenoyl)-sn-glycero-3-phosphate = 1-(9Z)-octadecenoyl-2-nonadecanoyl-sn-glycero-3-phosphate + CoA. It carries out the reaction 1-hexadecanoyl-sn-glycero-3-phosphocholine + (9Z)-octadecenoyl-CoA = 1-hexadecanoyl-2-(9Z-octadecenoyl)-sn-glycero-3-phosphocholine + CoA. The catalysed reaction is 1-O-hexadecyl-sn-glycero-3-phosphocholine + acetyl-CoA = 1-O-hexadecyl-2-acetyl-sn-glycero-3-phosphocholine + CoA. The enzyme catalyses 1-O-octadecyl-sn-glycero-3-phosphocholine + acetyl-CoA = 1-O-octadecyl-2-acetyl-sn-glycero-3-phosphocholine + CoA. It catalyses the reaction 1-hexadecanoyl-sn-glycero-3-phosphocholine + acetyl-CoA = 1-hexadecanoyl-2-acetyl-sn-glycero-3-phosphocholine + CoA. It carries out the reaction 1-octadecanoyl-sn-glycero-3-phosphocholine + acetyl-CoA = 1-octadecanoyl-2-acetyl-sn-glycero-3-phosphocholine + CoA. The catalysed reaction is a 1-O-(1Z-alkenyl)-sn-glycero-3-phosphocholine + acetyl-CoA = 1-O-(1Z)-alkenyl-2-acetyl-sn-glycero-3-phosphocholine + CoA. The enzyme catalyses 1-O-octadecyl-sn-glycero-3-phosphocholine + (5Z,8Z,11Z,14Z)-eicosatetraenoyl-CoA = 1-O-octadecyl-2-(5Z,8Z,11Z,14Z)-eicosatetraenoyl-sn-glycero-3-phosphocholine + CoA. Its pathway is lipid metabolism; phospholipid metabolism. Its function is as follows. Exhibits both acyltransferase and acetyltransferase activities. Catalyzes the conversion of lysophosphatidylcholine (1-acyl-sn-glycero-3-phosphocholine or LPC) into phosphatidylcholine (1,2-diacyl-sn-glycero-3-phosphocholine or PC). Catalyzes the conversion 1-acyl-sn-glycerol-3-phosphate (lysophosphatidic acid or LPA) into 1,2-diacyl-sn-glycerol-3-phosphate (phosphatidic acid or PA) by incorporating an acyl moiety at the sn-2 position of the glycerol backbone. Involved in platelet-activating factor (PAF) biosynthesis by catalyzing the conversion of the PAF precursor, 1-O-alkyl-sn-glycero-3-phosphocholine (lyso-PAF) into 1-O-alkyl-2-acetyl-sn-glycero-3-phosphocholine (PAF). Also converts lyso-PAF to 1-O-alkyl-2-acyl-sn-glycero-3-phosphocholine (PC), a major component of cell membranes and a PAF precursor. Under resting conditions, acyltransferase activity is preferred. Upon acute inflammatory stimulus, acetyltransferase activity is enhanced and PAF synthesis increases. Involved in the regulation of lipid droplet number and size. This chain is Lysophosphatidylcholine acyltransferase 2 (LPCAT2), found in Homo sapiens (Human).